A 145-amino-acid polypeptide reads, in one-letter code: Flagellar assembly factor FliW (145 aa).

This sequence belongs to the FliW family. Interacts with translational regulator CsrA and flagellin(s).

The protein resides in the cytoplasm. Its function is as follows. Acts as an anti-CsrA protein, binds CsrA and prevents it from repressing translation of its target genes, one of which is flagellin. Binds to flagellin and participates in the assembly of the flagellum. The polypeptide is Flagellar assembly factor FliW (Anoxybacillus flavithermus (strain DSM 21510 / WK1)).